The following is a 242-amino-acid chain: Carboxy-S-adenosyl-L-methionine synthase (242 aa).

Residues Tyr39, 64–66 (GCS), 89–90 (DN), 117–118 (DI), Asn132, and Arg199 each bind S-adenosyl-L-methionine.

The protein belongs to the class I-like SAM-binding methyltransferase superfamily. Cx-SAM synthase family. As to quaternary structure, homodimer.

The catalysed reaction is prephenate + S-adenosyl-L-methionine = carboxy-S-adenosyl-L-methionine + 3-phenylpyruvate + H2O. Its function is as follows. Catalyzes the conversion of S-adenosyl-L-methionine (SAM) to carboxy-S-adenosyl-L-methionine (Cx-SAM). The chain is Carboxy-S-adenosyl-L-methionine synthase from Psychromonas ingrahamii (strain DSM 17664 / CCUG 51855 / 37).